The primary structure comprises 119 residues: Large ribosomal subunit protein uL18 (119 aa).

Belongs to the universal ribosomal protein uL18 family. Part of the 50S ribosomal subunit; part of the 5S rRNA/L5/L18/L25 subcomplex. Contacts the 5S and 23S rRNAs.

In terms of biological role, this is one of the proteins that bind and probably mediate the attachment of the 5S RNA into the large ribosomal subunit, where it forms part of the central protuberance. This Xylella fastidiosa (strain M23) protein is Large ribosomal subunit protein uL18.